The primary structure comprises 351 residues: Peptide chain release factor 1 (351 aa).

Position 229 is an N5-methylglutamine (Gln-229).

The protein belongs to the prokaryotic/mitochondrial release factor family. In terms of processing, methylated by PrmC. Methylation increases the termination efficiency of RF1.

The protein localises to the cytoplasm. Functionally, peptide chain release factor 1 directs the termination of translation in response to the peptide chain termination codons UAG and UAA. The chain is Peptide chain release factor 1 from Dinoroseobacter shibae (strain DSM 16493 / NCIMB 14021 / DFL 12).